The following is a 250-amino-acid chain: Kv channel-interacting protein 4 (250 aa).

Positions 2–44 (NVRRVESISAQLEEASSTGGFLYAQNNTKRSIKERLMKLLPCS) are KIS. 2 positions are modified to phosphoserine: S17 and S56. Residues 61–117 (LEMATVRHRPEALELLEAQSKFTKKELQILYRGFKNECPSGVVNEETFKEIYSQFFP) enclose the EF-hand 1; degenerate domain. EF-hand domains follow at residues 120–155 (DSTT…LLRG), 156–191 (TVQE…IYDM), and 204–239 (APRQ…DENI). Ca(2+)-binding residues include D133, D135, N137, D144, D169, N171, D173, Y175, E180, D217, N219, D221, and E228. Positions 237-250 (ENIMRSMQLFENVI) are interaction with KCND2.

This sequence belongs to the recoverin family. As to quaternary structure, component of heteromultimeric potassium channels. Identified in potassium channel complexes containing KCND1, KCND2, KCND3, KCNIP1, KCNIP2, KCNIP3, KCNIP4, DPP6 and DPP10. Interacts with the C-terminus of PSEN2 and probably PSEN1. Interacts with KCND2 and KCND3. Expressed in brain. Highly expressed by neurons in layers II-IV of cortex and in hippocampus, thalamus and the Purkinje cell layer of the cerebellum.

It localises to the cell membrane. Its subcellular location is the cytoplasm. The protein resides in the peroxisome. In terms of biological role, regulatory subunit of Kv4/D (Shal)-type voltage-gated rapidly inactivating A-type potassium channels, such as KCND2/Kv4.2 and KCND3/Kv4.3. Modulates channel expression at the cell membrane, gating characteristics, inactivation kinetics and rate of recovery from inactivation in a calcium-dependent and isoform-specific manner. This Mus musculus (Mouse) protein is Kv channel-interacting protein 4 (Kcnip4).